The sequence spans 249 residues: ATP synthase subunit a (249 aa).

Transmembrane regions (helical) follow at residues 33 to 53 (GQVI…SIAA), 92 to 112 (LPFI…GALI), 131 to 151 (INTT…AGIS), 196 to 216 (LVVA…LMAL), and 217 to 237 (GLFT…AYIH).

It belongs to the ATPase A chain family. As to quaternary structure, F-type ATPases have 2 components, CF(1) - the catalytic core - and CF(0) - the membrane proton channel. CF(1) has five subunits: alpha(3), beta(3), gamma(1), delta(1), epsilon(1). CF(0) has four main subunits: a, b, b' and c.

It is found in the cellular thylakoid membrane. In terms of biological role, key component of the proton channel; it plays a direct role in the translocation of protons across the membrane. The chain is ATP synthase subunit a from Microcystis aeruginosa (strain NIES-843 / IAM M-2473).